A 169-amino-acid chain; its full sequence is uncharacterized protein (169 aa).

The protein to M.tuberculosis Rv1480.

This is an uncharacterized protein from Mycobacterium avium.